Reading from the N-terminus, the 350-residue chain is Cytochrome c biogenesis protein CcsA (350 aa).

A run of 8 helical transmembrane segments spans residues 23-43 (NVAF…AAFP), 47-67 (LLAE…AALL), 82-102 (LYES…LALH), 108-128 (WVGV…ALVL), 153-173 (VMLL…SFLI), 258-278 (LIGL…VWAN), 293-313 (WALI…TKGW), and 319-339 (ALLA…VNFL).

This sequence belongs to the CcmF/CycK/Ccl1/NrfE/CcsA family. May interact with ccs1.

Its subcellular location is the cellular thylakoid membrane. Its function is as follows. Required during biogenesis of c-type cytochromes (cytochrome c6 and cytochrome f) at the step of heme attachment. The sequence is that of Cytochrome c biogenesis protein CcsA from Synechococcus sp. (strain JA-2-3B'a(2-13)) (Cyanobacteria bacterium Yellowstone B-Prime).